The chain runs to 116 residues: Ribosome-binding factor A (116 aa).

Belongs to the RbfA family. As to quaternary structure, monomer. Binds 30S ribosomal subunits, but not 50S ribosomal subunits or 70S ribosomes.

It localises to the cytoplasm. In terms of biological role, one of several proteins that assist in the late maturation steps of the functional core of the 30S ribosomal subunit. Associates with free 30S ribosomal subunits (but not with 30S subunits that are part of 70S ribosomes or polysomes). Required for efficient processing of 16S rRNA. May interact with the 5'-terminal helix region of 16S rRNA. This Streptococcus mutans serotype c (strain ATCC 700610 / UA159) protein is Ribosome-binding factor A.